We begin with the raw amino-acid sequence, 132 residues long: Small ribosomal subunit protein uS9 (132 aa).

The protein belongs to the universal ribosomal protein uS9 family.

This is Small ribosomal subunit protein uS9 (rpsI) from Mycoplasma genitalium (strain ATCC 33530 / DSM 19775 / NCTC 10195 / G37) (Mycoplasmoides genitalium).